The chain runs to 123 residues: Secreted LysM effector Lys1 (123 aa).

Residues 1–20 (MMGLAKTLLLASQLTAVVVA) form the signal peptide. Residues 72–118 (KFCWVQAGNKCYQVAMENHISLADFLKWNPGAGSDCRTLWANTYACV) enclose the LysM domain.

Belongs to the secreted LysM effector family.

Functionally, might have a role in sequestration of chitin oligosaccharides (breakdown products of fungal cell walls that are released during invasion and act as triggers of host immunity) to dampen host defense. This is Secreted LysM effector Lys1 from Pochonia chlamydosporia (strain 123) (Metacordyceps chlamydosporia).